We begin with the raw amino-acid sequence, 398 residues long: Enoyl-[acyl-carrier-protein] reductase [NADH] (398 aa).

NAD(+) contacts are provided by residues 48–53 (GASTGY), 74–75 (FE), 111–112 (DA), and 139–140 (LA). Tyrosine 225 contacts substrate. Tyrosine 235 functions as the Proton donor in the catalytic mechanism. Residues lysine 244 and 273-275 (VVT) contribute to the NAD(+) site.

Belongs to the TER reductase family. In terms of assembly, monomer.

The enzyme catalyses a 2,3-saturated acyl-[ACP] + NAD(+) = a (2E)-enoyl-[ACP] + NADH + H(+). The protein operates within lipid metabolism; fatty acid biosynthesis. Functionally, involved in the final reduction of the elongation cycle of fatty acid synthesis (FAS II). Catalyzes the reduction of a carbon-carbon double bond in an enoyl moiety that is covalently linked to an acyl carrier protein (ACP). The protein is Enoyl-[acyl-carrier-protein] reductase [NADH] of Pseudomonas fluorescens (strain ATCC BAA-477 / NRRL B-23932 / Pf-5).